The primary structure comprises 603 residues: Insulin-like growth factor-binding protein complex acid labile subunit (603 aa).

An N-terminal signal peptide occupies residues 1–23 (MALRTGSPALVVLLAFWVALGPC). Residues 32–74 (ASADAEGPQCPVTCTCSYDDYTDELSVFCSSRNLTQLPDGIPV) enclose the LRRNT domain. Intrachain disulfides connect Cys41–Cys47 and Cys45–Cys60. Residues Asn64, Asn85, and Asn96 are each glycosylated (N-linked (GlcNAc...) asparagine). LRR repeat units follow at residues 75 to 96 (STRALWLDGNNLSSIPSAAFQN), 99 to 120 (SLDFLNLQGSWLRSLEPQALLG), 123 to 144 (NLYHLHLERNLLRSLAAGLFRH), 147 to 168 (SLASLSLGNNLLGRLEEGLFRG), 171 to 192 (HLWDLNLGWNSLVVLPDTVFQG), 195 to 216 (NLHELVLAGNKLTYLQPALLCG), 219 to 240 (ELRELDLSRNALRSVKANVFIH), 243 to 264 (RLQKLYLDRNLITAVAPRAFLG), 267 to 288 (ALRWLDLSHNRVAGLLEDTFPG), 291 to 312 (GLHVLRLAHNAITSLRPRTFKD), 315 to 336 (FLEELQLGHNRIRQLGEKTFEG), 339 to 360 (QLEVLTLNDNQIHEVKVGAFFG), 363 to 384 (NVAVMNLSGNCLRSLPEHVFQG), 387 to 408 (RLHSLHLEHSCLGRIRLHTFAG), 411 to 432 (GLRRLFLRDNSISSIEEQSLAG), 435 to 456 (ELLELDLTANQLTHLPRQLFQG), 459 to 480 (QLEYLLLSNNQLTMLSEDVLGP), 483 to 504 (RAFWLDLSHNRLETPAEGLFSS), and 507 to 528 (RLRYLNLRNNSLQTFVPQPGLE). N-linked (GlcNAc...) asparagine glycosylation is present at Asn368. Asn515 carries N-linked (GlcNAc...) asparagine glycosylation. An LRRCT domain is found at 535–603 (NPWDCSCPLK…DISETLFVHC (69 aa)). 3 disulfides stabilise this stretch: Cys539–Cys581, Cys541–Cys603, and Cys565–Cys570. Residues Asn578 and Asn586 are each glycosylated (N-linked (GlcNAc...) asparagine).

In terms of assembly, forms a ternary complex with IGF1 and IGFBP3.

The protein localises to the secreted. It is found in the extracellular space. Functionally, may have an important role in regulating the access of circulating IGFs to the tissues. The sequence is that of Insulin-like growth factor-binding protein complex acid labile subunit (Igfals) from Mus musculus (Mouse).